A 263-amino-acid polypeptide reads, in one-letter code: Probable ABC transporter permease protein ycf63 (263 aa).

5 helical membrane passes run 43–63 (IVGPGSLNITLLTACFISMVF), 70–89 (EFLYLDAASAIGAVIVIAFT), 150–170 (ILSIISLTASIAISLFVAFVM), 188–208 (ISDFLICLEKSMFFAIIIGFI), and 230–250 (SVVTILFTVFITDFVLSYFMF).

It belongs to the MlaE permease family.

The protein localises to the plastid. Its subcellular location is the chloroplast membrane. Could be part of an ABC transporter complex. This chain is Probable ABC transporter permease protein ycf63 (ycf63), found in Pyropia yezoensis (Susabi-nori).